The sequence spans 123 residues: Ribosome-binding factor A (123 aa).

The protein belongs to the RbfA family. Monomer. Binds 30S ribosomal subunits, but not 50S ribosomal subunits or 70S ribosomes.

It is found in the cytoplasm. Its function is as follows. One of several proteins that assist in the late maturation steps of the functional core of the 30S ribosomal subunit. Associates with free 30S ribosomal subunits (but not with 30S subunits that are part of 70S ribosomes or polysomes). Required for efficient processing of 16S rRNA. May interact with the 5'-terminal helix region of 16S rRNA. In Syntrophus aciditrophicus (strain SB), this protein is Ribosome-binding factor A.